The primary structure comprises 226 residues: CASP-like protein 2BC1 (226 aa).

The Cytoplasmic segment spans residues 1–37 (MRKHIDIVFSRLSGPILNPPPDNNVIPKTDRKLRITE). A helical membrane pass occupies residues 38-58 (VILRFAVVIFALVSAIMVGTA). The Extracellular segment spans residues 59–78 (SGTRDLGGGIRIHAHFTLLK). A helical transmembrane segment spans residues 79 to 99 (TLPFLVIVDGILAVYSLLQGL). Topologically, residues 100–114 (RCFLSLYMRHILLNK) are cytoplasmic. A helical membrane pass occupies residues 115-135 (ALAWTIFCCDQALAYVIFAAA). Residues 136–170 (ASTAETAYISEQGLDELQWIKVCMFFRAYCFKSGA) are Extracellular-facing. Residues 171 to 191 (GMINAFLAALCMVFVSGMSVF) traverse the membrane as a helical segment. Residues 192 to 226 (HLFRLYGEKRAYGHIAEQVVISEEAAERRNSLNGI) lie on the Cytoplasmic side of the membrane.

Belongs to the Casparian strip membrane proteins (CASP) family. In terms of assembly, homodimer and heterodimers.

It localises to the cell membrane. The polypeptide is CASP-like protein 2BC1 (Picea sitchensis (Sitka spruce)).